Here is a 395-residue protein sequence, read N- to C-terminus: DNA polymerase IV (395 aa).

The UmuC domain maps to 7 to 187 (FFHVDIDAFF…LPLKDVWGVG (181 aa)). Mg(2+) is bound by residues Asp11 and Asp105. Glu106 is a catalytic residue.

This sequence belongs to the DNA polymerase type-Y family. In terms of assembly, monomer. It depends on Mg(2+) as a cofactor.

The protein resides in the cytoplasm. It catalyses the reaction DNA(n) + a 2'-deoxyribonucleoside 5'-triphosphate = DNA(n+1) + diphosphate. Poorly processive, error-prone DNA polymerase involved in untargeted mutagenesis. Copies undamaged DNA at stalled replication forks, which arise in vivo from mismatched or misaligned primer ends. These misaligned primers can be extended by PolIV. Exhibits no 3'-5' exonuclease (proofreading) activity. May be involved in translesional synthesis, in conjunction with the beta clamp from PolIII. The sequence is that of DNA polymerase IV from Treponema denticola (strain ATCC 35405 / DSM 14222 / CIP 103919 / JCM 8153 / KCTC 15104).